A 460-amino-acid chain; its full sequence is Elongation factor 1-alpha (460 aa).

Position 2 is a n,N,N-trimethylglycine (Gly2). Lys3 carries the N6,N6-dimethyllysine; alternate modification. Lys3 carries the post-translational modification N6-methyllysine; alternate. Positions 6–241 constitute a tr-type G domain; the sequence is KTHINVVVIG…DAIEPPKRPT (236 aa). The G1 stretch occupies residues 15–22; sequence GHVDSGKS. Residue 15-22 participates in GTP binding; sequence GHVDSGKS. Lys31 carries the N6-methyllysine modification. A G2 region spans residues 71–75; the sequence is GITID. Lys80 carries the N6,N6,N6-trimethyllysine modification. Residues 92 to 95 form a G3 region; that stretch reads DAPG. Residues 92–96 and 154–157 each bind GTP; these read DAPGH and NKMD. Residues 154–157 form a G4 region; it reads NKMD. The segment at 193 to 195 is G5; it reads SGF. Lys317 bears the N6,N6-dimethyllysine; alternate mark. Lys317 bears the N6-methyllysine; alternate mark. N6-methyllysine is present on Lys391.

The protein belongs to the TRAFAC class translation factor GTPase superfamily. Classic translation factor GTPase family. EF-Tu/EF-1A subfamily.

The protein resides in the cytoplasm. This protein promotes the GTP-dependent binding of aminoacyl-tRNA to the A-site of ribosomes during protein biosynthesis. The polypeptide is Elongation factor 1-alpha (tef-1) (Neurospora crassa (strain ATCC 24698 / 74-OR23-1A / CBS 708.71 / DSM 1257 / FGSC 987)).